A 114-amino-acid polypeptide reads, in one-letter code: UPF0342 protein SE_1526 (114 aa).

The protein belongs to the UPF0342 family.

In Staphylococcus epidermidis (strain ATCC 12228 / FDA PCI 1200), this protein is UPF0342 protein SE_1526.